A 320-amino-acid chain; its full sequence is Uridine phosphorylase 2 (320 aa).

Phosphate contacts are provided by residues glycine 66, arginine 100, and 144–147 (RIGT). A disulfide bond links cysteine 95 and cysteine 102. Uridine is bound by residues 148–149 (SG) and 223–225 (QGR).

This sequence belongs to the PNP/UDP phosphorylase family. As to quaternary structure, homodimer. Liver specific.

The catalysed reaction is uridine + phosphate = alpha-D-ribose 1-phosphate + uracil. The enzyme catalyses 2'-deoxyuridine + phosphate = 2-deoxy-alpha-D-ribose 1-phosphate + uracil. Its pathway is pyrimidine metabolism; UMP biosynthesis via salvage pathway; uracil from uridine (phosphorylase route): step 1/1. Its activity is regulated as follows. A conditional disulfide bridge can form within the protein that dislocates a critical phosphate-coordinating arginine Arg-100 away from the active site, disabling the enzyme. Its function is as follows. Catalyzes the reversible phosphorylytic cleavage of uridine to uracil and ribose-1-phosphate which can then be utilized as carbon and energy sources or in the rescue of pyrimidine bases for nucleotide synthesis. Shows broad substrate specificity and can also accept deoxyuridine and other analogous compounds. This Mus musculus (Mouse) protein is Uridine phosphorylase 2.